The following is a 345-amino-acid chain: Biotin synthase (345 aa).

One can recognise a Radical SAM core domain in the interval 59 to 286 (NEVQLSTLLS…TTMVRLSAGR (228 aa)). The [4Fe-4S] cluster site is built by cysteine 74, cysteine 78, and cysteine 81. 4 residues coordinate [2Fe-2S] cluster: cysteine 118, cysteine 149, cysteine 209, and arginine 281.

This sequence belongs to the radical SAM superfamily. Biotin synthase family. Homodimer. [4Fe-4S] cluster is required as a cofactor. Requires [2Fe-2S] cluster as cofactor.

It catalyses the reaction (4R,5S)-dethiobiotin + (sulfur carrier)-SH + 2 reduced [2Fe-2S]-[ferredoxin] + 2 S-adenosyl-L-methionine = (sulfur carrier)-H + biotin + 2 5'-deoxyadenosine + 2 L-methionine + 2 oxidized [2Fe-2S]-[ferredoxin]. Its pathway is cofactor biosynthesis; biotin biosynthesis; biotin from 7,8-diaminononanoate: step 2/2. In terms of biological role, catalyzes the conversion of dethiobiotin (DTB) to biotin by the insertion of a sulfur atom into dethiobiotin via a radical-based mechanism. In Leptothrix cholodnii (strain ATCC 51168 / LMG 8142 / SP-6) (Leptothrix discophora (strain SP-6)), this protein is Biotin synthase.